A 547-amino-acid chain; its full sequence is Cdc42-interacting protein 4 (547 aa).

The interval 1-117 (MDWGTELWDQ…EMKQERKMHF (117 aa)) is required for translocation to the plasma membrane in response to insulin, podosome formation and interaction with AKAP9 and microtubules. In terms of domain architecture, F-BAR spans 1–264 (MDWGTELWDQ…AAESVDAKND (264 aa)). A coiled-coil region spans residues 67-259 (FSQQQSFVQL…EGMKVAAESV (193 aa)). The interaction with CDC42 stretch occupies residues 293-483 (RVPSDSSLGT…YTEFDEDFEE (191 aa)). The tract at residues 293–547 (RVPSDSSLGT…PTSYLRVTLN (255 aa)) is interaction with PDE6G. The tract at residues 294–323 (VPSDSSLGTPDGRPELRAASSRSRAKRWPF) is disordered. A phosphoserine mark is found at Ser296, Ser298, and Ser299. Positions 332 to 425 (TEDFSHLPPE…ESRVLSNRGD (94 aa)) form a coiled coil. The REM-1 domain occupies 337-414 (HLPPEQQRKR…VQKYEAWLAE (78 aa)). Positions 415 to 547 (AESRVLSNRG…PTSYLRVTLN (133 aa)) are required for interaction with FASLG and localization to lysosomes. The interval 420–485 (LSNRGDSLSR…EFDEDFEEPA (66 aa)) is disordered. At Ser426 the chain carries Phosphoserine. Positions 431–487 (TRPPDPPTTAPPDSSSSSNNSGSQDNKESSEEPPSEEGQDTPIYTEFDEDFEEPASP) are interaction with DNM2 and WASL. The span at 441–451 (PPDSSSSSNNS) shows a compositional bias: low complexity. Residues 476 to 547 (EFDEDFEEPA…PTSYLRVTLN (72 aa)) form an interaction with DNM1 and WASL region. Residues 484–547 (PASPIGQCVA…PTSYLRVTLN (64 aa)) are required for podosome formation. The SH3 domain occupies 486–547 (SPIGQCVAIY…PTSYLRVTLN (62 aa)). Residues 490-547 (QCVAIYHFEGSSEGTVSMSEGEDLSLMEEDKGDGWTRVRRKQGGEGYVPTSYLRVTLN) form an interaction with WAS region. The interaction with ARHGAP17, DAAM1, DIAPH1 and DIAPH2 stretch occupies residues 492 to 547 (VAIYHFEGSSEGTVSMSEGEDLSLMEEDKGDGWTRVRRKQGGEGYVPTSYLRVTLN).

Belongs to the FNBP1 family. In terms of assembly, homodimerizes, the dimers can polymerize end-to-end to form filamentous structures. Interacts specifically with GTP-bound CDC42 and RHOQ. Interacts with AKAP9, ARHGAP17, DAAM1, DIAPH1, DIAPH2, DNM1, DNM2, FASLG/FASL, GAPVD1, LYN, microtubules, SRC, WAS/WASP and WASL/N-WASP. Interacts with the ligand binding domain of the thyroid receptor (TR) in the presence of thyroid hormone. May interact with CTNNB1 and HD/HTT. Interacts with PDE6G. Expressed in adrenal gland, aorta, brain, heart, kidney, liver, skeletal muscle and spleen.

The protein localises to the cytoplasm. The protein resides in the cytoskeleton. It localises to the cell cortex. It is found in the lysosome. Its subcellular location is the golgi apparatus. The protein localises to the cell membrane. The protein resides in the cell projection. It localises to the phagocytic cup. Its function is as follows. Required to coordinate membrane tubulation with reorganization of the actin cytoskeleton during endocytosis. Also acts as a link between CDC42 signaling and regulation of the actin cytoskeleton. Binds to lipids such as phosphatidylinositol 4,5-bisphosphate and phosphatidylserine and promotes membrane invagination and the formation of tubules. Also enhances actin polymerization in the vicinity of membrane tubules by recruiting WASL/N-WASP which in turn activates the Arp2/3 complex. Actin polymerization and dynamin may promote the fission of membrane tubules to form endocytic vesicles. Required for the formation of podosomes, actin-rich adhesion structures specific to monocyte-derived cells. Required for translocation of GLUT4 to the plasma membrane in response to insulin signaling. May be required for the lysosomal retention of FASLG/FASL. The protein is Cdc42-interacting protein 4 (Trip10) of Rattus norvegicus (Rat).